Here is a 424-residue protein sequence, read N- to C-terminus: Histidine--tRNA ligase (424 aa).

The protein belongs to the class-II aminoacyl-tRNA synthetase family. As to quaternary structure, homodimer.

The protein resides in the cytoplasm. It carries out the reaction tRNA(His) + L-histidine + ATP = L-histidyl-tRNA(His) + AMP + diphosphate + H(+). The protein is Histidine--tRNA ligase of Shigella flexneri.